The chain runs to 147 residues: Hemoglobin subunit beta (147 aa).

At V2 the chain carries N-acetylvaline. Residues 3 to 147 (HLTGDEKAAV…VANALAHKYH (145 aa)) form the Globin domain. Position 13 is a phosphothreonine (T13). At S45 the chain carries Phosphoserine. The residue at position 60 (K60) is an N6-acetyllysine. H64 is a heme b binding site. An N6-acetyllysine modification is found at K83. H93 contacts heme b. The residue at position 94 (C94) is an S-nitrosocysteine. K145 is modified (N6-acetyllysine).

It belongs to the globin family. Heterotetramer of two alpha chains and two beta chains. In terms of tissue distribution, red blood cells.

Involved in oxygen transport from the lung to the various peripheral tissues. In Saimiri sciureus (Common squirrel monkey), this protein is Hemoglobin subunit beta (HBB).